A 496-amino-acid polypeptide reads, in one-letter code: Lysine--tRNA ligase (496 aa).

Mg(2+)-binding residues include Glu-407 and Glu-414.

The protein belongs to the class-II aminoacyl-tRNA synthetase family. In terms of assembly, homodimer. Requires Mg(2+) as cofactor.

The protein localises to the cytoplasm. The catalysed reaction is tRNA(Lys) + L-lysine + ATP = L-lysyl-tRNA(Lys) + AMP + diphosphate. The polypeptide is Lysine--tRNA ligase (Staphylococcus haemolyticus (strain JCSC1435)).